The primary structure comprises 1143 residues: ATP-dependent helicase/deoxyribonuclease subunit B (1143 aa).

The UvrD-like helicase ATP-binding domain occupies 1-274; it reads MNYMHLGRAG…YGQTVKFQST (274 aa). Residue 7-14 participates in ATP binding; the sequence is GRAGTGKT. Positions 267–565 constitute a UvrD-like helicase C-terminal domain; it reads QTVKFQSTGL…RFSLVPPSLD (299 aa). Residues Cys-782, Cys-1104, Cys-1107, and Cys-1113 each contribute to the [4Fe-4S] cluster site.

This sequence belongs to the helicase family. AddB/RexB type 1 subfamily. As to quaternary structure, heterodimer of AddA and AddB. Requires Mg(2+) as cofactor. [4Fe-4S] cluster is required as a cofactor.

In terms of biological role, the heterodimer acts as both an ATP-dependent DNA helicase and an ATP-dependent, dual-direction single-stranded exonuclease. Recognizes the chi site generating a DNA molecule suitable for the initiation of homologous recombination. The AddB subunit has 5' -&gt; 3' nuclease activity but not helicase activity. In Exiguobacterium sibiricum (strain DSM 17290 / CCUG 55495 / CIP 109462 / JCM 13490 / 255-15), this protein is ATP-dependent helicase/deoxyribonuclease subunit B.